The sequence spans 299 residues: MDPTLISLGALALAGAAATVSGCAEDLESDVGSQSNPNSQVQLGPQMGNIHRYFNKAISGEPVSYGLYVAVAGTIAWALINAGLNVVLAIIVGAGVAAIVHGAYSVSAFLGRTVGQSKKFGQPVYMDVLTSHIGPIVGHGFIAVFTMTLAAYLATTALGNPFPLPLVSLIFGITVGAIGSSTGDVHYGAEREYQKYPFGGGIPVANQGDIDIYAEYGVRNGLDSSYFCSRFGGPLTGLCFGLIIFLDGWRSILGNIIGGDLVTKTSIALLVGLLVVAVAAVINRKLEVYARNKYGPYRN.

6 helical membrane-spanning segments follow: residues 57–79 (AISG…AWAL), 89–111 (AIIV…AFLG), 132–154 (HIGP…AYLA), 164–183 (LPLV…SSTG), 227–246 (FCSR…IIFL), and 261–283 (LVTK…AVIN).

This sequence belongs to the MtrE family. The complex is composed of 8 subunits; MtrA, MtrB, MtrC, MtrD, MtrE, MtrF, MtrG and MtrH.

The protein localises to the cell membrane. The enzyme catalyses 5-methyl-5,6,7,8-tetrahydromethanopterin + coenzyme M + 2 Na(+)(in) = 5,6,7,8-tetrahydromethanopterin + methyl-coenzyme M + 2 Na(+)(out). It functions in the pathway one-carbon metabolism; methanogenesis from CO(2); methyl-coenzyme M from 5,10-methylene-5,6,7,8-tetrahydromethanopterin: step 2/2. Part of a complex that catalyzes the formation of methyl-coenzyme M and tetrahydromethanopterin from coenzyme M and methyl-tetrahydromethanopterin. This is an energy-conserving, sodium-ion translocating step. This is Tetrahydromethanopterin S-methyltransferase subunit E from Methanococcus maripaludis (strain DSM 14266 / JCM 13030 / NBRC 101832 / S2 / LL).